The chain runs to 332 residues: Anthranilate phosphoribosyltransferase (332 aa).

5-phospho-alpha-D-ribose 1-diphosphate contacts are provided by residues glycine 78, 81–82 (GD), threonine 86, 88–91 (NVST), 106–114 (KHGNRAASS), and alanine 118. Glycine 78 serves as a coordination point for anthranilate. Serine 90 contributes to the Mg(2+) binding site. Asparagine 109 contacts anthranilate. Arginine 164 is a binding site for anthranilate. Residues aspartate 223 and glutamate 224 each coordinate Mg(2+).

It belongs to the anthranilate phosphoribosyltransferase family. Homodimer. Mg(2+) is required as a cofactor.

It carries out the reaction N-(5-phospho-beta-D-ribosyl)anthranilate + diphosphate = 5-phospho-alpha-D-ribose 1-diphosphate + anthranilate. Its pathway is amino-acid biosynthesis; L-tryptophan biosynthesis; L-tryptophan from chorismate: step 2/5. Catalyzes the transfer of the phosphoribosyl group of 5-phosphorylribose-1-pyrophosphate (PRPP) to anthranilate to yield N-(5'-phosphoribosyl)-anthranilate (PRA). The sequence is that of Anthranilate phosphoribosyltransferase from Sphingopyxis alaskensis (strain DSM 13593 / LMG 18877 / RB2256) (Sphingomonas alaskensis).